A 423-amino-acid polypeptide reads, in one-letter code: MDSLTAANNKFCFDFFREISKDDAHKNIFVCPLSLSAAFGMVRLGARGDSAHQIDEALHFNELSKDEHKEPNDPSPQSESKASDSSLEGQKQTSASQDQQGESTNDHQLLGCHFGKLLSRIDRDKSYYTLSMANRLYGEQEFPICSEYSDDVTEFFHTTVESVDFQKDSEKSRQEINFWVESQSQGKIKELFGKEAIDNSTVLVLVNAVYFKAKWEREFNSENTVDASFCLNENEKKTVKMMNQKGKFRIGFIDELQAQILEMKYAMGKLSMLVLLPSCSEDNVNSLQELEKKINHEKLLAWSSSENLSEKPVAISFPQFNLEDSYDLKSILQDMGIKDVFDETKADLTGISKSPNLYLSKIVHKTFVEVDEMGTQAAAASGVVAAEKALPSWVEFNANHPFLFFIRHNPTQSLLFCGRVYCP.

Residues 63 to 72 (LSKDEHKEPN) show a composition bias toward basic and acidic residues. The interval 63–106 (LSKDEHKEPNDPSPQSESKASDSSLEGQKQTSASQDQQGESTND) is disordered. Positions 75–106 (SPQSESKASDSSLEGQKQTSASQDQQGESTND) are enriched in polar residues.

Belongs to the serpin family. Ov-serpin subfamily. In terms of assembly, interacts with SLFN12; as part of a pathway regulating cell differentiation.

The protein localises to the cytoplasm. Its function is as follows. Inhibits trypsin and plasmin, but not thrombin, coagulation factor Xa, or urokinase-type plasminogen activator. May play a role in cell differentiation. The sequence is that of Serpin B12 (Serpinb12) from Mus musculus (Mouse).